The primary structure comprises 223 residues: 7-cyano-7-deazaguanine synthase (223 aa).

ATP is bound at residue 8-18; sequence MSGGMDSTLCA. 4 residues coordinate Zn(2+): cysteine 187, cysteine 195, cysteine 198, and cysteine 201.

Belongs to the QueC family. Zn(2+) serves as cofactor.

The enzyme catalyses 7-carboxy-7-deazaguanine + NH4(+) + ATP = 7-cyano-7-deazaguanine + ADP + phosphate + H2O + H(+). Its pathway is purine metabolism; 7-cyano-7-deazaguanine biosynthesis. In terms of biological role, catalyzes the ATP-dependent conversion of 7-carboxy-7-deazaguanine (CDG) to 7-cyano-7-deazaguanine (preQ(0)). The chain is 7-cyano-7-deazaguanine synthase from Campylobacter curvus (strain 525.92).